The sequence spans 1649 residues: PHD and RING finger domain-containing protein 1 (1649 aa).

The disordered stretch occupies residues 1–79 (MDDDSLDELV…RSGSEDSEDD (79 aa)). Ser-5 is subject to Phosphoserine. A compositionally biased stretch (acidic residues) spans 54–79 (TDGEDEGASEEEDLEDRSGSEDSEDD). The segment at 108–149 (CPICLNAFRDQAVGTPENCAHYFCLDCIVEWSKNANSCPVDR) adopts an RING-type; degenerate zinc-finger fold. A PHD-type zinc finger spans residues 183–233 (PTFCEVCGRSDREDRLLLCDGCDAGYHMECLDPPLQEVPVDEWFCPECAAP). The segment at 324–398 (VYQRPLTPRT…TRSRIARTLG (75 aa)) is disordered. The residue at position 330 (Thr-330) is a Phosphothreonine. A compositionally biased stretch (basic residues) spans 334–353 (PARRKRKTRRRKKVPGRKKT). A compositionally biased stretch (low complexity) spans 354 to 366 (PSGPSAKSKSSAT). Residues 367-382 (RSKKRQHRVKKRRGKK) are compositionally biased toward basic residues. Ser-445 and Ser-455 each carry phosphoserine. Disordered regions lie at residues 534-600 (KRAA…GAPV), 644-871 (SAAS…PKAQ), 888-1240 (FGTE…KAPL), and 1281-1395 (IQLD…PLLR). The segment covering 568–589 (SPAQGPSGNRPQSTGLSCQGRS) has biased composition (polar residues). Basic and acidic residues-rich tracts occupy residues 685 to 697 (IRRD…RDAA) and 727 to 742 (TRAE…REPG). Residues 786–796 (AHSSQLSSPGF) show a composition bias toward polar residues. Residues 802 to 812 (PVDDKEQRKEN) are compositionally biased toward basic and acidic residues. Phosphoserine is present on residues Ser-814, Ser-845, Ser-846, Ser-864, Ser-867, and Ser-915. 2 stretches are compositionally biased toward polar residues: residues 835–848 (PTGS…SSPE) and 859–871 (ITRT…PKAQ). The residue at position 917 (Thr-917) is a Phosphothreonine. Phosphoserine occurs at positions 936, 973, and 991. The span at 988 to 999 (RPPSRSRSTSSS) shows a compositional bias: low complexity. The segment covering 1000 to 1011 (RSRKKAKRKRVS) has biased composition (basic residues). The span at 1012 to 1030 (REHGRTRSGTRSESRDRSS) shows a compositional bias: basic and acidic residues. The segment covering 1043 to 1053 (RRQRSKAKSRR) has biased composition (basic residues). Positions 1054 to 1063 (SSSDRSSSRE) are enriched in basic and acidic residues. The span at 1064–1090 (RAKRKKAKDKSREHRRGPWGHSRRTSR) shows a compositional bias: basic residues. Positions 1091 to 1101 (SRSGSPGSSSY) are enriched in low complexity. Positions 1106–1118 (SRKKKKRRSASRP) are enriched in basic residues. Phosphoserine is present on residues Ser-1124 and Ser-1128. 2 stretches are compositionally biased toward basic and acidic residues: residues 1141–1151 (RSHERPDRKES) and 1181–1198 (REKW…KGAV). Phosphoserine is present on residues Ser-1202 and Ser-1229. The span at 1284-1297 (DDMSSPPSPESTDS) shows a compositional bias: low complexity. Residues 1345–1356 (HLLRPDAAEKAE) are compositionally biased toward basic and acidic residues. Phosphoserine is present on residues Ser-1359, Ser-1360, and Ser-1371. Thr-1404 carries the post-translational modification Phosphothreonine. 4 disordered regions span residues 1407–1439 (LQES…WDME), 1455–1486 (FPSH…AQPS), 1526–1556 (TPAS…EKTK), and 1630–1649 (MRRH…GAEG). The segment covering 1531-1540 (PASQATAASN) has biased composition (polar residues). A compositionally biased stretch (basic and acidic residues) spans 1541 to 1556 (SEEKTPAPRLAAEKTK). Residues 1549–1579 (RLAAEKTKKEEYMKKLHMQERAVEEVKLAIK) adopt a coiled-coil conformation.

As to quaternary structure, interacts with POLR2A (via the C-terminal domain).

This chain is PHD and RING finger domain-containing protein 1 (PHRF1), found in Homo sapiens (Human).